Reading from the N-terminus, the 206-residue chain is LexA repressor (206 aa).

Positions 28–48 (RAEIATRLGFKSANAAEEHLK) form a DNA-binding region, H-T-H motif. Residues Ser123 and Lys160 each act as for autocatalytic cleavage activity in the active site.

It belongs to the peptidase S24 family. As to quaternary structure, homodimer.

The catalysed reaction is Hydrolysis of Ala-|-Gly bond in repressor LexA.. Functionally, represses a number of genes involved in the response to DNA damage (SOS response), including recA and lexA. In the presence of single-stranded DNA, RecA interacts with LexA causing an autocatalytic cleavage which disrupts the DNA-binding part of LexA, leading to derepression of the SOS regulon and eventually DNA repair. This Shewanella baltica (strain OS223) protein is LexA repressor.